The following is a 521-amino-acid chain: Bifunctional purine biosynthesis protein PurH (521 aa).

In terms of domain architecture, MGS-like spans 1–147 (MAKITRALIS…KNNADVTVLV (147 aa)).

Belongs to the PurH family.

It carries out the reaction (6R)-10-formyltetrahydrofolate + 5-amino-1-(5-phospho-beta-D-ribosyl)imidazole-4-carboxamide = 5-formamido-1-(5-phospho-D-ribosyl)imidazole-4-carboxamide + (6S)-5,6,7,8-tetrahydrofolate. The enzyme catalyses IMP + H2O = 5-formamido-1-(5-phospho-D-ribosyl)imidazole-4-carboxamide. It functions in the pathway purine metabolism; IMP biosynthesis via de novo pathway; 5-formamido-1-(5-phospho-D-ribosyl)imidazole-4-carboxamide from 5-amino-1-(5-phospho-D-ribosyl)imidazole-4-carboxamide (10-formyl THF route): step 1/1. The protein operates within purine metabolism; IMP biosynthesis via de novo pathway; IMP from 5-formamido-1-(5-phospho-D-ribosyl)imidazole-4-carboxamide: step 1/1. The sequence is that of Bifunctional purine biosynthesis protein PurH from Geobacter sulfurreducens (strain ATCC 51573 / DSM 12127 / PCA).